The following is a 187-amino-acid chain: Calcium and integrin-binding family member 2 (187 aa).

3 EF-hand domains span residues 66–101, 103–138, and 144–179; these read KENP…LSEM, PREL…LTKE, and EVNL…APDF. Ca(2+)-binding residues include Asp157, Asp159, Asp161, Lys163, and Asp168.

In terms of assembly, monomer. Homodimer. In terms of tissue distribution, enriched in central and striolar hair cells.

The protein resides in the cytoplasm. The protein localises to the cell projection. It is found in the stereocilium. Its subcellular location is the photoreceptor inner segment. It localises to the cilium. The protein resides in the photoreceptor outer segment. The protein localises to the cell membrane. It is found in the sarcolemma. In terms of biological role, calcium- and integrin-binding protein. Plays a role in intracellular calcium homeostasis. Critical for proper photoreceptor cell maintenance and function. Essential for development, maintenance and function of mechanosensory hair cells. This chain is Calcium and integrin-binding family member 2, found in Danio rerio (Zebrafish).